The primary structure comprises 634 residues: Ankyrin repeat and SOCS box protein 2 (634 aa).

Residues 26-45 (SEEELLQMAIEQSLADKTRG) enclose the UIM domain. Residues 36–82 (EQSLADKTRGPTPAEASASSQTNHQPGHFHPWTRSPSSPENPPARAP) form a disordered region. 12 ANK repeats span residues 104-133 (AAMDPVLKAIKEGDEEALKIMIQDGKNLAE), 137-167 (EGWLPLHEAAYYGQLGCLKVLQQAYPGTIDQ), 171-200 (QEETALYLATCREHLDCLLSLLQAGAEPDI), 204-233 (SRETPLYKACERKNAEAVRILVRYNADANH), 237-266 (RGWTALHESVSRNDLEVMEILVSGGAKVEA), 270-299 (YSITPLFVAAQSGQLEALRFLAKHGADINT), 303-332 (DSASALYEASKNEHEDVVEFLLSQGADANK), 336-365 (DGLLPLHVASKKGNYRIVQMLLPVTSRTRV), 368-397 (SGISPLHLAAERNHDAVLEALLAARFDVNA), 410-439 (RRSSALYFAVVNNNVYATELLLLAGADPNR), 440-469 (DVISPLLVAIRHGCLRTMQLLLDHGANIDA), and 476-504 (TAFPATIMFAMKCLSLLKFLMDLGCDGEP). At Ser371 the chain carries Phosphoserine. Residues 580–634 (EDWAVIKEKAEPPRPLAHLCRLRVRKAIGKYRIKLLDTLPLPGRLIRYLKYENTQ) enclose the SOCS box domain.

This sequence belongs to the ankyrin SOCS box (ASB) family. As to quaternary structure, component of a probable ECS E3 ubiquitin-protein ligase complex which contains CUL5, either RBX1 or RNF7/RBX2, Elongin BC complex (ELOB and ELOC) and ASB2. Interacts with SKP2. Through its interaction with SKP2, likely to bridge the formation of dimeric E3-ubiquitin-protein ligase complexes composed of an ECS complex and an SCF(SKP2) complex. Interacts with JAK2; the interaction targets JAK2 for Notch-mediated proteasomal degradation. Interacts with TCF3/E2A; the interaction is mediated by SKP2 and targets TCF3 for Notch-mediated proteasomal degradation. In terms of assembly, interacts with DES. Monoubiquitinated. Post-translationally, not monoubiquitinated. In terms of processing, phosphorylation at Ser-371 is required for association with FLNA and subsequent FLNA degradation. In terms of tissue distribution, highest expression in muscle, heart and spleen. Highly expressed in cells of the first and second heart fields in the developing embryonic heart. At 9.5 dpc, robust expression predominantly in the left and right ventricles (RV) and to a lower extent in inflow and outflow tracts. At 10.5 and 11.5 dpc, expression is restricted to the myocardium with no expression observed in the endocardium. Not expressed in immature dendritic cells. Highly expressed in adult skeletal muscle with very low levels in adult bone marrow. As to expression, expressed in immature dendritic cells and in primary dendritic cells derived from the spleen. Highly expressed in adult bone marrow with negligible levels in adult skeletal muscle. Expressed at higher levels in T helper type 2 (Th2) cells than in regulatory T (Treg) cells, type 1 helper T (Th1) cells and T helper 17 (Th17) cells.

The protein resides in the cytoplasm. The protein localises to the cytoskeleton. It is found in the stress fiber. It localises to the myofibril. Its subcellular location is the sarcomere. The protein resides in the z line. Its pathway is protein modification; protein ubiquitination. In terms of biological role, substrate-recognition component of a SCF-like ECS (Elongin-Cullin-SOCS-box protein) E3 ubiquitin-protein ligase complex which mediates the ubiquitination and subsequent proteasomal degradation of target proteins. Mediates Notch-induced ubiquitination and degradation of substrates including TCF3/E2A and JAK2. Required during embryonic heart development for complete heart looping. Required for cardiomyocyte differentiation. Specifically promotes the ubiquitination of SMAD9 and targets it for proteasomal degradation, leading to avoid excessive accumulation of SMAD9. Plays a role in the regulation of NK-cell migration by modulating protein levels of filamin A/FLNA via regulation of its ubiquitination and proteasome degradation. Involved in myogenic differentiation and targets filamin FLNB for proteasomal degradation but not filamin FLNA. Also targets DES for proteasomal degradation. Acts as a negative regulator of skeletal muscle mass. Functionally, targets filamins FLNA and FLNB for proteasomal degradation. This leads to enhanced adhesion of hematopoietic cells to fibronectin. Required for FLNA degradation in immature cardiomyocytes which is necessary for actin cytoskeleton remodeling, leading to proper organization of myofibrils and function of mature cardiomyocytes. Required for degradation of FLNA and FLNB in immature dendritic cells (DC) which enhances immature DC migration by promoting DC podosome formation and DC-mediated degradation of the extracellular matrix. Does not promote proteasomal degradation of tyrosine-protein kinases JAK1 or JAK2 in hematopoietic cells. This is Ankyrin repeat and SOCS box protein 2 from Mus musculus (Mouse).